A 90-amino-acid chain; its full sequence is Sec-independent protein translocase protein TatA (90 aa).

Residues 1–21 (MGISPWTLLIVLLIVLLVFGT) traverse the membrane as a helical segment. Basic and acidic residues-rich tracts occupy residues 42 to 59 (MKEGEEGAKEGEKSEPSK) and 70 to 90 (SGEGHTIEGERSEQPRDRHSS). The disordered stretch occupies residues 42–90 (MKEGEEGAKEGEKSEPSKLEQPPEEEKESGEGHTIEGERSEQPRDRHSS).

The protein belongs to the TatA/E family. In terms of assembly, the Tat system comprises two distinct complexes: a TatABC complex, containing multiple copies of TatA, TatB and TatC subunits, and a separate TatA complex, containing only TatA subunits. Substrates initially bind to the TatABC complex, which probably triggers association of the separate TatA complex to form the active translocon.

The protein resides in the cell inner membrane. Functionally, part of the twin-arginine translocation (Tat) system that transports large folded proteins containing a characteristic twin-arginine motif in their signal peptide across membranes. TatA could form the protein-conducting channel of the Tat system. This chain is Sec-independent protein translocase protein TatA, found in Alkalilimnicola ehrlichii (strain ATCC BAA-1101 / DSM 17681 / MLHE-1).